A 115-amino-acid polypeptide reads, in one-letter code: Nitrogenase-stabilizing/protective protein NifW (115 aa).

Belongs to the NifW family. In terms of assembly, homotrimer; associates with NifD.

May protect the nitrogenase Fe-Mo protein from oxidative damage. The chain is Nitrogenase-stabilizing/protective protein NifW from Stutzerimonas stutzeri (strain A1501) (Pseudomonas stutzeri).